Here is a 230-residue protein sequence, read N- to C-terminus: Large ribosomal subunit protein uL1 (230 aa).

It belongs to the universal ribosomal protein uL1 family. Part of the 50S ribosomal subunit.

Functionally, binds directly to 23S rRNA. The L1 stalk is quite mobile in the ribosome, and is involved in E site tRNA release. Protein L1 is also a translational repressor protein, it controls the translation of the L11 operon by binding to its mRNA. In Lactobacillus gasseri (strain ATCC 33323 / DSM 20243 / BCRC 14619 / CIP 102991 / JCM 1131 / KCTC 3163 / NCIMB 11718 / NCTC 13722 / AM63), this protein is Large ribosomal subunit protein uL1.